The chain runs to 258 residues: ER membrane protein complex subunit 3 (258 aa).

Transmembrane regions (helical) follow at residues 8-28 (PALRNWVLLPIMFVMILIGIL), 123-143 (VVPQTIIMTWINEFFSGFILL), and 173-193 (SISWYFLNLFGLKSVYALLLG).

Belongs to the EMC3 family.

It is found in the cytoplasm. It localises to the membrane. The polypeptide is ER membrane protein complex subunit 3 (Schizosaccharomyces pombe (strain 972 / ATCC 24843) (Fission yeast)).